The following is a 317-amino-acid chain: Long form salivary protein D7L2 (317 aa).

A signal peptide spans 1-20 (MYKLLVALHLILCTVSHVKT). 5 disulfides stabilise this stretch: Cys-39/Cys-76, Cys-72/Cys-131, Cys-181/Cys-214, Cys-195/Cys-316, and Cys-255/Cys-266. Residues Trp-58 and Tyr-73 each contribute to the thromboxane A2 site. Residues Glu-182, Tyr-264, Asp-281, Asp-284, and Met-308 each coordinate serotonin.

This sequence belongs to the PBP/GOBP family. As to expression, female salivary gland.

It is found in the secreted. In terms of biological role, modulates blood feeding of female mosquitoes on vertebrate species by binding and sequestering different mediators involved in the host response, such as biogenic amines and eicosanoids. Binds serotonin with high affinity. Binds tryptamine, octopamine, dopamine and noradrenaline with low affinity. Binds leukotriene C4, leukotriene D4, leukotriene E4 and U-46619, a stable analog of thromboxane A2. Does not bind leukotriene B4, adrenaline, histamine and ADP. Inhibits platelet aggregation induced by low concentrations of collagen and arachidonic acid but not by ADP or adrenaline. The sequence is that of Long form salivary protein D7L2 from Anopheles darlingi (Mosquito).